The sequence spans 1458 residues: MVKLDIHTLAHHLKQERLYVSSEKQLIQRLNADVLKTAEKLYRTAWIAKQQRINLDRLIITSAEASPAECCQHAKILEDTQFVDGYKQLGFQETAYGEFLSRLRENPRLIASSLVAGEKLNQENTQSVIYTVFTSLYGNCIMQEDESYLLQVLRYLIEFELKESDNPRRLLRRGTCAFSILFKLFSEGLFSAKLFLTATLHEPIMQLLVEDEDHLETDPNKLIERFSPAQQEKLFGEKGSDRFRQKVQEMVDSNEAKLVALVNKFIGYLKQNTYCFPHSLRWIVSQMYKTLSCVDRLEVGEVRAMCTDLLLACFICPAVVNPEQYGIISDAPINEVARFNLMQVGRLLQQLAMTGTEEGDPRTKNSLGKFDKGCVAAFLDVVIGGRAVETPPMSSVNLLEGLSRTVVYISYSQLITLVNFMKSVMSGDQLKEDRMALDNLLANLPQAKPGKSSSLDMTPYSTPQMSPATTPANKKNRLPIATRSRSRSNMLMDLHMDHEGSSQETIQEVQPEEVLVISLGTGPQLTPGMMSENEVLNMQLSDGGQGDVPVDENKLHGKPDKTLRFSLCSDNLEGISEGPSNRSNSVSSLDLEGESVSELGAGPSGSNGVEALQLLEHEQATTQDNLDDKLRKFEIRDMMGLTDDRDISETVSETWSTDVLGSDFDPNVDEDRLQEIAGAAAENVLGSLLCLPGSGSVLLDPCTGSTISETTSEAWSVEVLPSDSEAPDLKQEERLQELESCSGLGSTSDDTDVREVSSRPSTPGLSVVSGISATSEDIPNKIEDLRSECSSDFGGKDSVTSPDMDDIAHGAHQLTSPPSQSESLLAMFDPLSSHEGASAVVRPKVHYARPSHPPPDPPILEGAVGGNEARLPNFGSHVLTAAEMEAFKQRHSYPERLVRSRSSDIVSSVRRPMSDPSWNRRPGNEELPPAAATGATSLVAAPHSSSSSPSKDSSRGETEERKDSDDERSDRSRPWWRKRFVSAMPKAPIPFRKKEKQEKDKDDLGPDRFSTLTDEPSPRLSAQAQVAEDILDKYRNAIKRTSPSEGAMANDESAEVMGDGESAHDSPREEALQNISADDLPDSASQAAHPQDSAFSYRDVKKKLRLALCSADSVAFPVLTHSTRNGLPDHTDPEDNEIVCFLKVQIAEAINLQDKSLMAQLQETMRCVCRFDNRTCRKLLASIAEDYRKRAPYIAYLTRCRQGLQTTQAHLERLLQRVLRDKEVANRYFTTVCVRLLLESKEKKIREFIQDFQKLTAADDKTAQVEDFLQFLYGVMAQDVIWQNASEEQLQDAQLAIERSVMNRIFKLAFYPNQDGDILRDQVLHEHIQRLSKVVTANHRALQIPEVYLREAPWPSAQSEIRTISAYKTPRDKVQCILRMCSTIMNLLSLANEDSVPGADDFVPVLVFVLIKANPPCLLSTVQYISSFYASCLSGEESYWWMQFTAAVEFIKTIDDRK.

In terms of domain architecture, Ras-GAP spans 147-385 (SYLLQVLRYL…AAFLDVVIGG (239 aa)). Serine 227 bears the Phosphoserine mark. Residues threonine 390 and threonine 458 each carry the phosphothreonine modification. The interval 447–475 (AKPGKSSSLDMTPYSTPQMSPATTPANKK) is disordered. Positions 451 to 473 (KSSSLDMTPYSTPQMSPATTPAN) are enriched in polar residues. Tyrosine 460 is modified (phosphotyrosine). At serine 466 the chain carries Phosphoserine. The residue at position 470 (threonine 470) is a Phosphothreonine. Phosphoserine is present on residues serine 566 and serine 569. 3 disordered regions span residues 574–608 (GISE…GSNG), 738–821 (LESC…PSQS), and 846–867 (HYAR…VGGN). Positions 578–588 (GPSNRSNSVSS) are enriched in polar residues. 3 positions are modified to phosphoserine: serine 742, serine 746, and serine 757. Positions 758-777 (SRPSTPGLSVVSGISATSED) are enriched in polar residues. Threonine 762 is modified (phosphothreonine). Serine 766 carries the post-translational modification Phosphoserine. Residues 778–789 (IPNKIEDLRSEC) show a composition bias toward basic and acidic residues. Residues serine 876, serine 902, serine 903, serine 908, and serine 914 each carry the phosphoserine modification. Residues 888–902 (KQRHSYPERLVRSRS) show a composition bias toward basic and acidic residues. Disordered regions lie at residues 888–1022 (KQRH…RLSA) and 1039–1072 (KRTS…EEAL). A compositionally biased stretch (low complexity) spans 930–951 (AAATGATSLVAAPHSSSSSPSK). Basic and acidic residues-rich tracts occupy residues 952–973 (DSSR…DRSR) and 995–1006 (EKQEKDKDDLGP). A Phosphoserine modification is found at serine 964. Over residues 1010–1022 (STLTDEPSPRLSA) the composition is skewed to polar residues. Phosphoserine is present on residues serine 1017 and serine 1044. Positions 1061–1071 (ESAHDSPREEA) are enriched in basic and acidic residues. A phosphoserine mark is found at serine 1076 and serine 1083. The region spanning 1318 to 1458 (ILRDQVLHEH…EFIKTIDDRK (141 aa)) is the VPS9 domain.

The protein belongs to the GAPVD1 family. In terms of assembly, interacts with RAB5A. Interacts with TRIP10/CIP4. As to expression, present in adipocytes and fibroblasts (at protein level). Ubiquitously expressed.

Its subcellular location is the membrane. The protein localises to the endosome. In terms of biological role, acts both as a GTPase-activating protein (GAP) and a guanine nucleotide exchange factor (GEF), and participates in various processes such as endocytosis, insulin receptor internalization or LC2A4/GLUT4 trafficking. Acts as a GEF for the Ras-related protein RAB31 by exchanging bound GDP for free GTP, leading to regulate LC2A4/GLUT4 trafficking. In the absence of insulin, it maintains RAB31 in an active state and promotes a futile cycle between LC2A4/GLUT4 storage vesicles and early endosomes, retaining LC2A4/GLUT4 inside the cells. Upon insulin stimulation, it is translocated to the plasma membrane, releasing LC2A4/GLUT4 from intracellular storage vesicles. Also involved in EGFR trafficking and degradation, possibly by promoting EGFR ubiquitination and subsequent degradation by the proteasome. Has GEF activity for Rab5 and GAP activity for Ras. The chain is GTPase-activating protein and VPS9 domain-containing protein 1 (Gapvd1) from Mus musculus (Mouse).